Here is a 365-residue protein sequence, read N- to C-terminus: MKFIDEARIEAIAGNGGNGSASFRREKFVPFGGPDGGDGGRGGSVFAQADRNINTLIDFRYAKKHVARNGENGRGSDCYGAAGEDVTLRMPVGTLISDMDTGEVIADLTEHGQLVCLAEGGMGGWGNLHFKSSTNRAPRQQVDGKPGERRMLKLELKVLADVGLLGMPNAGKSTFISHVSNARPKVADYPFTTLHPNLGVVRVDHEQSFVVADIPGLIEGAAEGAGLGHQFLRHLQRTGLLLHIVDIAPFDENVDPVAEAKAIVNELKKYDETLYDKPRWLVLNKLDVVPEEERAARVKDFVKRYKWKGPVFHISALTGEGCRELVYAIKDHLAALKAEEAAALAEPDIRLDDRLHNVDRDDSKA.

The Obg domain maps to 1 to 159 (MKFIDEARIE…RMLKLELKVL (159 aa)). The 175-residue stretch at 160 to 334 (ADVGLLGMPN…LVYAIKDHLA (175 aa)) folds into the OBG-type G domain. GTP-binding positions include 166–173 (GMPNAGKS), 191–195 (FTTLH), 213–216 (DIPG), 284–287 (NKLD), and 315–317 (SAL). Mg(2+) contacts are provided by Ser173 and Thr193.

The protein belongs to the TRAFAC class OBG-HflX-like GTPase superfamily. OBG GTPase family. Monomer. Mg(2+) is required as a cofactor.

It is found in the cytoplasm. An essential GTPase which binds GTP, GDP and possibly (p)ppGpp with moderate affinity, with high nucleotide exchange rates and a fairly low GTP hydrolysis rate. Plays a role in control of the cell cycle, stress response, ribosome biogenesis and in those bacteria that undergo differentiation, in morphogenesis control. The protein is GTPase Obg of Cupriavidus metallidurans (strain ATCC 43123 / DSM 2839 / NBRC 102507 / CH34) (Ralstonia metallidurans).